The sequence spans 329 residues: Malate dehydrogenase (329 aa).

Residue 13-19 (GAAGNIS) coordinates NAD(+). Substrate contacts are provided by R94 and R100. Residues N107, Q114, and 131–133 (VGN) contribute to the NAD(+) site. Substrate contacts are provided by N133 and R164. H189 functions as the Proton acceptor in the catalytic mechanism.

Belongs to the LDH/MDH superfamily. MDH type 2 family.

The enzyme catalyses (S)-malate + NAD(+) = oxaloacetate + NADH + H(+). Catalyzes the reversible oxidation of malate to oxaloacetate. This chain is Malate dehydrogenase, found in Psychrobacter cryohalolentis (strain ATCC BAA-1226 / DSM 17306 / VKM B-2378 / K5).